Here is a 637-residue protein sequence, read N- to C-terminus: Early transcription factor 70 kDa subunit (637 aa).

Positions 32–185 (RTIIDENRSV…GHIIDLMSEE (154 aa)) constitute a Helicase ATP-binding domain. 45–52 (HIMGSGKT) contacts ATP. The DEXH box signature appears at 135–138 (DEAH). Residues 327–507 (KFKYFINRIQ…VLPFDIKKLL (181 aa)) enclose the Helicase C-terminal domain.

It belongs to the helicase family. VETF subfamily. In terms of assembly, heterodimer of a 70 kDa and a 82 kDa subunit. Part of the early transcription complex composed of ETF, RAP94/OPG109, and the DNA-directed RNA polymerase.

Its subcellular location is the virion. Its function is as follows. Acts with RNA polymerase to initiate transcription from early gene promoters. Is recruited by the RPO-associated protein of 94 kDa RAP94/OPG109 to form the early transcription complex, which also contains the core RNA polymerase. ETF heterodimer binds to early gene promoters. This chain is Early transcription factor 70 kDa subunit (OPG118), found in Vaccinia virus (strain Ankara) (VACV).